A 72-amino-acid polypeptide reads, in one-letter code: Translation initiation factor IF-1 (72 aa).

In terms of domain architecture, S1-like spans 1-72 (MAKEDVIEVE…NRGRIIYRFK (72 aa)).

The protein belongs to the IF-1 family. Component of the 30S ribosomal translation pre-initiation complex which assembles on the 30S ribosome in the order IF-2 and IF-3, IF-1 and N-formylmethionyl-tRNA(fMet); mRNA recruitment can occur at any time during PIC assembly.

It localises to the cytoplasm. Its function is as follows. One of the essential components for the initiation of protein synthesis. Stabilizes the binding of IF-2 and IF-3 on the 30S subunit to which N-formylmethionyl-tRNA(fMet) subsequently binds. Helps modulate mRNA selection, yielding the 30S pre-initiation complex (PIC). Upon addition of the 50S ribosomal subunit IF-1, IF-2 and IF-3 are released leaving the mature 70S translation initiation complex. The sequence is that of Translation initiation factor IF-1 from Syntrophomonas wolfei subsp. wolfei (strain DSM 2245B / Goettingen).